The sequence spans 336 residues: N-((2S)-2-amino-2-carboxyethyl)-L-glutamate dehydrogenase (336 aa).

K78 functions as the Proton donor/acceptor in the catalytic mechanism. Residues R122 and K242 each contribute to the NAD(+) site.

The protein belongs to the ornithine cyclodeaminase/mu-crystallin family. In terms of assembly, homodimer.

It catalyses the reaction N-[(2S)-2-amino-2-carboxyethyl]-L-glutamate + NAD(+) + H2O = (S)-2,3-diaminopropanoate + 2-oxoglutarate + NADH + H(+). The protein operates within siderophore biosynthesis. Functionally, catalyzes the hydrolysis of N-((2S)-2-amino-2-carboxyethyl)-L-glutamate (ACEGA) to form L-2,3-diaminopropionic acid and 2-oxoglutarate. Involved in the biosynthesis of L-2,3-diaminopropionic acid (L-Dap), a precursor of staphyloferrin B and antibiotics. The chain is N-((2S)-2-amino-2-carboxyethyl)-L-glutamate dehydrogenase from Staphylococcus aureus (strain NCTC 8325 / PS 47).